The following is a 292-amino-acid chain: Chronophin (292 aa).

Asp25 serves as the catalytic Nucleophile. Mg(2+) is bound by residues Asp25 and Asp27. The Proton donor role is filled by Asp27. Residues 58–60 (SNN), His178, and Lys209 each bind substrate. Asp234 serves as a coordination point for Mg(2+).

This sequence belongs to the HAD-like hydrolase superfamily. As to quaternary structure, homodimer. Mg(2+) is required as a cofactor. As to expression, ubiquitous. highly expressed in brain (at protein level).

It localises to the cytoplasm. It is found in the cytosol. The protein localises to the cytoskeleton. Its subcellular location is the cell projection. The protein resides in the ruffle membrane. It localises to the lamellipodium membrane. It is found in the cell membrane. The catalysed reaction is pyridoxal 5'-phosphate + H2O = pyridoxal + phosphate. The enzyme catalyses pyridoxine 5'-phosphate + H2O = pyridoxine + phosphate. It catalyses the reaction pyridoxamine + phosphate = pyridoxamine 5'-phosphate + H2O. It carries out the reaction O-phospho-L-seryl-[protein] + H2O = L-seryl-[protein] + phosphate. With respect to regulation, inhibited by beryllium trifluoride. Functions as a pyridoxal phosphate (PLP) phosphatase, which also catalyzes the dephosphorylation of pyridoxine 5'-phosphate (PNP) and pyridoxamine 5'-phosphate (PMP), with order of substrate preference PLP &gt; PNP &gt; PMP and therefore plays a role in vitamin B6 metabolism. Also functions as a protein serine phosphatase that specifically dephosphorylates 'Ser-3' in proteins of the actin-depolymerizing factor (ADF)/cofilin family like CFL1 and DSTN. Thereby, regulates cofilin-dependent actin cytoskeleton reorganization, being required for normal progress through mitosis and normal cytokinesis. Does not dephosphorylate phosphothreonines in LIMK1. Does not dephosphorylate peptides containing phosphotyrosine. This is Chronophin from Mus musculus (Mouse).